A 330-amino-acid polypeptide reads, in one-letter code: Aspartate--ammonia ligase (330 aa).

This sequence belongs to the class-II aminoacyl-tRNA synthetase family. AsnA subfamily.

Its subcellular location is the cytoplasm. It catalyses the reaction L-aspartate + NH4(+) + ATP = L-asparagine + AMP + diphosphate + H(+). The protein operates within amino-acid biosynthesis; L-asparagine biosynthesis; L-asparagine from L-aspartate (ammonia route): step 1/1. The chain is Aspartate--ammonia ligase from Aeromonas salmonicida (strain A449).